The following is a 124-amino-acid chain: Colorectal cancer-associated protein 1 (124 aa).

A helical transmembrane segment spans residues 77–97 (LYGCFCVGLVSGMAISVLLLA).

As to expression, expressed in gastrointestinal and immune tissue, as well as prostate, testis and ovary. Expressed in lamina propria and eosinophils but not in epithelial cells. Expression is greater in benign adjacent tissues than in colon tumors.

Its subcellular location is the membrane. This chain is Colorectal cancer-associated protein 1 (COLCA1), found in Homo sapiens (Human).